A 142-amino-acid chain; its full sequence is Universal stress protein C (142 aa).

This sequence belongs to the universal stress protein A family.

The protein resides in the cytoplasm. Required for resistance to DNA-damaging agents. The protein is Universal stress protein C (uspC) of Escherichia coli (strain K12).